A 144-amino-acid chain; its full sequence is UPF0299 membrane protein MS1271 (144 aa).

A run of 4 helical transmembrane segments spans residues 5–25, 28–48, 57–77, and 92–112; these read IFLF…GEGI, LIPI…IGLT, VFFG…PVSV, and SLLI…GFLG.

It belongs to the UPF0299 family.

It is found in the cell inner membrane. The polypeptide is UPF0299 membrane protein MS1271 (Mannheimia succiniciproducens (strain KCTC 0769BP / MBEL55E)).